Reading from the N-terminus, the 163-residue chain is SKP1-like protein 4 (163 aa).

The interaction with the F-box domain of F-box proteins stretch occupies residues 105–163 (ILAANYLNIGGLLDLTCKAVADQMRGKTPEQMRAHFNIKNDYTPEEEAEVRNENKWAFE).

The protein belongs to the SKP1 family. Part of a SCF (SKP1-cullin-F-box) protein ligase complex. Interacts with At1g56610, At1g67340, At3g62230, At3g59000, At4g27050, At1g55000, SKIP16 and SKIP32. In terms of tissue distribution, mostly expressed in inflorescence and siliques, and, to a lower extent, in seedlings, roots, and stems.

Its subcellular location is the nucleus. It participates in protein modification; protein ubiquitination. Involved in ubiquitination and subsequent proteasomal degradation of target proteins. Together with CUL1, RBX1 and a F-box protein, it forms a SCF E3 ubiquitin ligase complex. The functional specificity of this complex depends on the type of F-box protein. In the SCF complex, it serves as an adapter that links the F-box protein to CUL1. This Arabidopsis thaliana (Mouse-ear cress) protein is SKP1-like protein 4 (ASK4).